The chain runs to 418 residues: MANKLRNYTINFGPQHPAAHGVLRMILELDGEQIVRADPHIGLLHRGTEKLAETKTYLQALPYMDRLDYVSMMVNEQAYCLAVEKLAGIDVPIRAQYIRVMFAEVTRILNHLMGIGSHAFDIGAMTAILYAFRDREELMDLYEAVSGARMHAAYFRPGGVYRDLPGFMPKYESSKFRNAKVLKQLNESREGTMLDFIDAFCERFPKNIDTLETLLTDNRIWKQRTVGIGVVSPERAMQKGFTGVMLRGSGVEWDVRKTQPYEVYDKMDFDIPVGVNGDCYDRYLCRMEEMRQSVRIIKQCADWLRVNPGPVITANHKFAPPKRTEMKTGMEDLIHHFKLFTEGMHVPEGETYTAVEHPKGEFGVYIISDGANKPYRLKIRAPGFAHLQGMDEMAKGHMLADVVAIIGTQDIVFGEVDR.

Belongs to the complex I 49 kDa subunit family. In terms of assembly, NDH-1 is composed of 14 different subunits. Subunits NuoB, C, D, E, F, and G constitute the peripheral sector of the complex.

Its subcellular location is the cell inner membrane. It carries out the reaction a quinone + NADH + 5 H(+)(in) = a quinol + NAD(+) + 4 H(+)(out). NDH-1 shuttles electrons from NADH, via FMN and iron-sulfur (Fe-S) centers, to quinones in the respiratory chain. The immediate electron acceptor for the enzyme in this species is believed to be ubiquinone. Couples the redox reaction to proton translocation (for every two electrons transferred, four hydrogen ions are translocated across the cytoplasmic membrane), and thus conserves the redox energy in a proton gradient. The polypeptide is NADH-quinone oxidoreductase subunit D (Neisseria gonorrhoeae (strain ATCC 700825 / FA 1090)).